The chain runs to 223 residues: Ribonuclease 3 (223 aa).

An RNase III domain is found at 1-131; the sequence is MDGVDELLLR…LIGAVMVDQG (131 aa). Residue Glu44 coordinates Mg(2+). The active site involves Asp48. Residues Asp117 and Glu120 each coordinate Mg(2+). Residue Glu120 is part of the active site. Positions 157-220 constitute a DRBM domain; it reads DPKTKLQKLT…AMSALASLEN (64 aa).

It belongs to the ribonuclease III family. As to quaternary structure, homodimer. The cofactor is Mg(2+).

Its subcellular location is the cytoplasm. It catalyses the reaction Endonucleolytic cleavage to 5'-phosphomonoester.. Functionally, digests double-stranded RNA. Involved in the processing of primary rRNA transcript to yield the immediate precursors to the large and small rRNAs (23S and 16S). Processes some mRNAs, and tRNAs when they are encoded in the rRNA operon. Processes pre-crRNA and tracrRNA of type II CRISPR loci if present in the organism. This chain is Ribonuclease 3, found in Tropheryma whipplei (strain Twist) (Whipple's bacillus).